The sequence spans 197 residues: MNYTKAKYIMGAAKVSQLPEDTGVEVAFAGRSNAGKSSALNTLTDQKGLARVSKTPGRTQLINLFDLGDNKRLVDLPGYGYAKVSEAIKKQWQSEMENYLTTRKCLGGIVLLVDSRHELKEFDSLMIEMAISFDLNLHILLTKADKLNNKERAQANKMIESFLKTFIRTDKISYQLFSSLSKMGLDKLKEKLDIWYQ.

The EngB-type G domain maps to 22-197 (TGVEVAFAGR…LKEKLDIWYQ (176 aa)). Residues 30–37 (GRSNAGKS), 57–61 (GRTQL), 75–78 (DLPG), 142–145 (TKAD), and 177–179 (FSS) each bind GTP. 2 residues coordinate Mg(2+): Ser-37 and Thr-59.

This sequence belongs to the TRAFAC class TrmE-Era-EngA-EngB-Septin-like GTPase superfamily. EngB GTPase family. Requires Mg(2+) as cofactor.

Functionally, necessary for normal cell division and for the maintenance of normal septation. In Francisella philomiragia subsp. philomiragia (strain ATCC 25017 / CCUG 19701 / FSC 153 / O#319-036), this protein is Probable GTP-binding protein EngB.